Reading from the N-terminus, the 350-residue chain is 3-dehydroquinate synthase (350 aa).

Residues 106–110 (GVIGD), 130–131 (TS), Lys-143, and Lys-152 contribute to the NAD(+) site. Residues Glu-185, His-246, and His-263 each contribute to the Zn(2+) site.

This sequence belongs to the sugar phosphate cyclases superfamily. Dehydroquinate synthase family. The cofactor is Co(2+). Zn(2+) is required as a cofactor. It depends on NAD(+) as a cofactor.

It localises to the cytoplasm. The enzyme catalyses 7-phospho-2-dehydro-3-deoxy-D-arabino-heptonate = 3-dehydroquinate + phosphate. The protein operates within metabolic intermediate biosynthesis; chorismate biosynthesis; chorismate from D-erythrose 4-phosphate and phosphoenolpyruvate: step 2/7. Functionally, catalyzes the conversion of 3-deoxy-D-arabino-heptulosonate 7-phosphate (DAHP) to dehydroquinate (DHQ). The chain is 3-dehydroquinate synthase from Clostridium beijerinckii (strain ATCC 51743 / NCIMB 8052) (Clostridium acetobutylicum).